A 266-amino-acid chain; its full sequence is NAD-capped RNA hydrolase NudC (266 aa).

R74 is a binding site for substrate. Residues C103, C106, C121, and C124 each coordinate Zn(2+). Y129 contacts substrate. The Nudix hydrolase domain maps to 130–253 (PRVSPCIIVA…TIARVLIDET (124 aa)). Residues A163, E179, and E183 each coordinate a divalent metal cation. Residues 164-185 (GFVEAGETLEQCVAREVEEETG) carry the Nudix box motif. 197–204 (QPWAFPSN) is a substrate binding site. E224 contributes to the a divalent metal cation binding site. A246 serves as a coordination point for substrate.

It belongs to the Nudix hydrolase family. NudC subfamily. As to quaternary structure, homodimer. Requires Mg(2+) as cofactor. Mn(2+) serves as cofactor. Zn(2+) is required as a cofactor.

The catalysed reaction is a 5'-end NAD(+)-phospho-ribonucleoside in mRNA + H2O = a 5'-end phospho-adenosine-phospho-ribonucleoside in mRNA + beta-nicotinamide D-ribonucleotide + 2 H(+). It carries out the reaction NAD(+) + H2O = beta-nicotinamide D-ribonucleotide + AMP + 2 H(+). It catalyses the reaction NADH + H2O = reduced beta-nicotinamide D-ribonucleotide + AMP + 2 H(+). Functionally, mRNA decapping enzyme that specifically removes the nicotinamide adenine dinucleotide (NAD) cap from a subset of mRNAs by hydrolyzing the diphosphate linkage to produce nicotinamide mononucleotide (NMN) and 5' monophosphate mRNA. The NAD-cap is present at the 5'-end of some mRNAs and stabilizes RNA against 5'-processing. Has preference for mRNAs with a 5'-end purine. Catalyzes the hydrolysis of a broad range of dinucleotide pyrophosphates. This chain is NAD-capped RNA hydrolase NudC, found in Photobacterium profundum (strain SS9).